A 731-amino-acid polypeptide reads, in one-letter code: Polyadenylate-binding protein, cytoplasmic and nuclear (731 aa).

The segment covering 1–10 (MSADVSTTPA) has biased composition (polar residues). The disordered stretch occupies residues 1–51 (MSADVSTTPAAENVNGAAEASPAPAAAAPSATTPEVTAVENSTPAPAANQP). Residues 17–39 (AAEASPAPAAAAPSATTPEVTAV) are compositionally biased toward low complexity. RRM domains follow at residues 54–132 (ASLY…WSQR), 142–219 (GNVF…HHIS), 235–312 (TNVY…RAQK), and 338–472 (VNLY…LAQR). Disordered regions lie at residues 369–429 (VMRD…SDKK) and 603–665 (GGRG…NAQT). Over residues 616 to 627 (GMRGGPGYGQGR) the composition is skewed to gly residues. The span at 645 to 656 (QNAAAPAGPQEG) shows a compositional bias: low complexity. Residues 658–731 (AGGVNAQTLG…MRPLAFTMST (74 aa)) enclose the PABC domain.

It belongs to the polyadenylate-binding protein type-1 family.

The protein resides in the cytoplasm. It localises to the nucleus. Its function is as follows. Binds the poly(A) tail of mRNA. Appears to be an important mediator of the multiple roles of the poly(A) tail in mRNA biogenesis, stability and translation. In the nucleus, involved in both mRNA cleavage and polyadenylation. Is also required for efficient mRNA export to the cytoplasm. Acts in concert with a poly(A)-specific nuclease (PAN) to affect poly(A) tail shortening, which may occur concomitantly with either nucleocytoplasmic mRNA transport or translational initiation. In the cytoplasm, stimulates translation initiation and regulates mRNA decay through translation termination-coupled poly(A) shortening, probably mediated by PAN. The polypeptide is Polyadenylate-binding protein, cytoplasmic and nuclear (pab1) (Aspergillus niger (strain ATCC MYA-4892 / CBS 513.88 / FGSC A1513)).